The following is a 448-amino-acid chain: Adenylyltransferase and sulfurtransferase UBA4 (448 aa).

Residues Gly88, Asp109, 116–120, Lys133, and 177–178 contribute to the ATP site; these read SNLHR and DT. Cys219 and Cys222 together coordinate Zn(2+). Residue Cys236 is the Glycyl thioester intermediate; for adenylyltransferase activity of the active site. Zn(2+)-binding residues include Cys297 and Cys300. Positions 349–446 constitute a Rhodanese domain; the sequence is QGENSILIDV…WSKEIDSKIP (98 aa). Catalysis depends on Cys405, which acts as the Cysteine persulfide intermediate; for sulfurtransferase activity.

It in the N-terminal section; belongs to the HesA/MoeB/ThiF family. UBA4 subfamily. Zn(2+) serves as cofactor.

The protein localises to the cytoplasm. The protein resides in the cytosol. Its pathway is tRNA modification; 5-methoxycarbonylmethyl-2-thiouridine-tRNA biosynthesis. In terms of biological role, plays a central role in 2-thiolation of mcm(5)S(2)U at tRNA wobble positions of cytosolic tRNA(Lys), tRNA(Glu) and tRNA(Gln). Acts by mediating the C-terminal thiocarboxylation of sulfur carrier URM1. Its N-terminus first activates URM1 as acyl-adenylate (-COAMP), then the persulfide sulfur on the catalytic cysteine is transferred to URM1 to form thiocarboxylation (-COSH) of its C-terminus. The reaction probably involves hydrogen sulfide that is generated from the persulfide intermediate and that acts as a nucleophile towards URM1. Subsequently, a transient disulfide bond is formed. Does not use thiosulfate as sulfur donor; NFS1 probably acting as a sulfur donor for thiocarboxylation reactions. Prior mcm(5) tRNA modification by the elongator complex is required for 2-thiolation. May also be involved in protein urmylation. The polypeptide is Adenylyltransferase and sulfurtransferase UBA4 (Debaryomyces hansenii (strain ATCC 36239 / CBS 767 / BCRC 21394 / JCM 1990 / NBRC 0083 / IGC 2968) (Yeast)).